Reading from the N-terminus, the 106-residue chain is Putative defensin-like protein 224 (106 aa).

Residues 1 to 23 (MKTLSLFFTLVILISSCVSNLMA) form the signal peptide. Disulfide bonds link cysteine 60–cysteine 78, cysteine 64–cysteine 84, and cysteine 68–cysteine 86.

This sequence belongs to the DEFL family.

The protein resides in the secreted. The sequence is that of Putative defensin-like protein 224 from Arabidopsis thaliana (Mouse-ear cress).